The sequence spans 239 residues: uncharacterized protein (239 aa).

8 helical membrane-spanning segments follow: residues 4-24 (LIPK…LGMV), 29-49 (VIWH…VYPV), 61-81 (YQKW…ISVF), 84-104 (PPLI…MYFA), 116-136 (VAGV…GMGT), 139-159 (GWAW…SFYV), 180-200 (LLLP…AFIP), and 218-238 (IGIL…LFIT).

The protein to H.influenzae HI_1626.

The protein resides in the cell membrane. This is an uncharacterized protein from Bacillus subtilis (strain 168).